The chain runs to 322 residues: tRNA-specific adenosine deaminase subunit TAD3 (322 aa).

The 122-residue stretch at 162 to 283 (EVRNELSRAS…EMQRTGSLKL (122 aa)) folds into the CMP/dCMP-type deaminase domain. Zn(2+) contacts are provided by His216, Cys254, Cys257, and Cys322.

This sequence belongs to the cytidine and deoxycytidylate deaminase family. ADAT3 subfamily. In terms of assembly, heterodimer with TAD2.

Its subcellular location is the cytoplasm. The protein resides in the nucleus. The protein localises to the peroxisome. Structural subunit of tRNA-specific adenosine deaminase, which deaminates adenosine-34 (the first, also called wobble position of the anticodon) to inosine in many tRNAs. Inosine-34 allows the decoding of 3 different nucleotides at the third position of mRNA codons, as inosine is able to pair with U, C, and A. In Saccharomyces cerevisiae (strain ATCC 204508 / S288c) (Baker's yeast), this protein is tRNA-specific adenosine deaminase subunit TAD3 (TAD3).